Consider the following 738-residue polypeptide: uncharacterized protein (738 aa).

Over residues 1–10 (MQKKVVQSAS) the composition is skewed to polar residues. Disordered regions lie at residues 1–23 (MQKK…KRSS), 53–83 (EGTH…NPNP), and 219–266 (HQDG…PLST). Over residues 55 to 77 (THSASVHPSTSSTSHISSPSAFS) the composition is skewed to low complexity. A compositionally biased stretch (polar residues) spans 246-266 (GSPSPNRSLNVSNNTTPPLST). A phosphothreonine mark is found at threonine 260 and threonine 261. Positions 292-318 (CAKCQKDNKKCDDARPCQRCIKAKTDC) form a DNA-binding region, zn(2)-C6 fungal-type. Basic residues predominate over residues 323–335 (RKKRPTGVRRGPY). Disordered regions lie at residues 323 to 372 (RKKR…SDNQ) and 441 to 464 (DETG…SFTN). The span at 340–352 (DTSNNTKSTTASS) shows a compositional bias: low complexity. Residues 353–372 (GHSTQDSLSSKMLDPSSDNQ) show a composition bias toward polar residues.

Its subcellular location is the cytoplasm. The protein localises to the nucleus. This is an uncharacterized protein from Schizosaccharomyces pombe (strain 972 / ATCC 24843) (Fission yeast).